We begin with the raw amino-acid sequence, 122 residues long: uncharacterized protein (122 aa).

Over 1 to 24 (MKNRKFSNLLLLRLRILCFNKKPA) the chain is Cytoplasmic. The helical transmembrane segment at 25–45 (FAATSYAFFFRNFSVLIFIMV) threads the bilayer. Residues 46-57 (PDEKENGAAADN) are Extracellular-facing. Residues 58–78 (SFSLLIGRGVVLFLFYCPTAL) form a helical membrane-spanning segment. The Cytoplasmic portion of the chain corresponds to 79–122 (KMHGPVPAHWFCDKNIEAIQSDGQIRLLRSGPFPWSHGTCIRGA).

Its subcellular location is the membrane. This is an uncharacterized protein from Saccharomyces cerevisiae (strain ATCC 204508 / S288c) (Baker's yeast).